We begin with the raw amino-acid sequence, 196 residues long: Chromophore lyase CpcT/CpeT (196 aa).

The protein belongs to the CpcT/CpeT biliprotein lyase family.

Its function is as follows. Covalently attaches a chromophore to Cys residue(s) of phycobiliproteins. This chain is Chromophore lyase CpcT/CpeT, found in Synechococcus sp. (strain WH8020).